We begin with the raw amino-acid sequence, 387 residues long: 26S proteasome regulatory subunit 6B homolog (387 aa).

175-182 (GPPGTGKT) is an ATP binding site.

It belongs to the AAA ATPase family. In terms of assembly, the 26S proteasome consists of a 20S proteasome core and two 19S regulatory subunits. The 20S proteasome core is composed of 28 subunits that are arranged in four stacked rings, resulting in a barrel-shaped structure. The two end rings are each formed by seven alpha subunits, and the two central rings are each formed by seven beta subunits. The catalytic chamber with the active sites is on the inside of the barrel.

The protein localises to the cytoplasm. The protein resides in the nucleus. In terms of biological role, acts as a regulatory subunit of the 26S proteasome which degrades poly-ubiquitinated proteins in the cytoplasm and in the nucleus. It is essential for the regulated turnover of proteins and for the removal of misfolded proteins. The proteasome is a multicatalytic proteinase complex that is characterized by its ability to cleave peptides with Arg, Phe, Tyr, Leu, and Glu adjacent to the leaving group at neutral or slightly basic pH. The chain is 26S proteasome regulatory subunit 6B homolog from Encephalitozoon cuniculi (strain GB-M1) (Microsporidian parasite).